Reading from the N-terminus, the 178-residue chain is Large ribosomal subunit protein bL35m (178 aa).

This sequence belongs to the bacterial ribosomal protein bL35 family.

It is found in the mitochondrion. This chain is Large ribosomal subunit protein bL35m (mRpL35), found in Drosophila melanogaster (Fruit fly).